Consider the following 651-residue polypeptide: Receptor-like serine/threonine-protein kinase At4g25390 (651 aa).

A signal peptide spans 1-25 (MPSRSISAPVPVLAPAPIVSSLVPA). The Extracellular portion of the chain corresponds to 26 to 40 (APSGHQNKTTRIFPP). N32 is a glycosylation site (N-linked (GlcNAc...) asparagine). Residues 41-61 (FVVAGAGAGFSLFITLSVCFC) form a helical membrane-spanning segment. At 62–651 (KFSRKRSSPP…PLKTTRKQRR (590 aa)) the chain is on the cytoplasmic side. A disordered region spans residues 66–87 (KRSSPPAENASSSPRRPSPREF). A compositionally biased stretch (low complexity) spans 69 to 87 (SPPAENASSSPRRPSPREF). One can recognise a Protein kinase domain in the interval 99–633 (FSQANRLGQG…LKGEVNLPEL (535 aa)). Residues 105 to 113 (LGQGGFGVV) and K127 contribute to the ATP site. The active-site Proton acceptor is the D225.

The protein belongs to the protein kinase superfamily. Ser/Thr protein kinase family.

The protein localises to the cell membrane. The enzyme catalyses L-seryl-[protein] + ATP = O-phospho-L-seryl-[protein] + ADP + H(+). It carries out the reaction L-threonyl-[protein] + ATP = O-phospho-L-threonyl-[protein] + ADP + H(+). The chain is Receptor-like serine/threonine-protein kinase At4g25390 from Arabidopsis thaliana (Mouse-ear cress).